The chain runs to 456 residues: tRNA modification GTPase MnmE (456 aa).

3 residues coordinate (6S)-5-formyl-5,6,7,8-tetrahydrofolate: arginine 21, glutamate 85, and lysine 124. The 160-residue stretch at 220-379 (QLRIVLYGEP…LLDEIQKKAA (160 aa)) folds into the TrmE-type G domain. Asparagine 230 is a K(+) binding site. Residues 230 to 235 (NTGKSS), 249 to 255 (SEIPGTT), and 274 to 277 (DTAG) each bind GTP. Serine 234 contributes to the Mg(2+) binding site. K(+) contacts are provided by serine 249, isoleucine 251, and threonine 254. Threonine 255 serves as a coordination point for Mg(2+). Lysine 456 serves as a coordination point for (6S)-5-formyl-5,6,7,8-tetrahydrofolate.

The protein belongs to the TRAFAC class TrmE-Era-EngA-EngB-Septin-like GTPase superfamily. TrmE GTPase family. Homodimer. Heterotetramer of two MnmE and two MnmG subunits. Requires K(+) as cofactor.

The protein resides in the cytoplasm. In terms of biological role, exhibits a very high intrinsic GTPase hydrolysis rate. Involved in the addition of a carboxymethylaminomethyl (cmnm) group at the wobble position (U34) of certain tRNAs, forming tRNA-cmnm(5)s(2)U34. The sequence is that of tRNA modification GTPase MnmE from Leptospira borgpetersenii serovar Hardjo-bovis (strain JB197).